A 186-amino-acid polypeptide reads, in one-letter code: MSHEELAEVLAKVLKKRGAVLRGDFVLSSGRRSSVYIDMRRLLGDESSYSVALDLLLEVGGQDLARSSAVIGVATGGLPWAAMLALRLSKPLGYVRPERKGHGTLSQVEGDPPKGRVVVVDDVATTGTSIAKSIEVLRSNGYTVGTALVLVDRGEGAGELLARMGVRLVSVATLKTILEKLGWGGE.

5-phospho-alpha-D-ribose 1-diphosphate contacts are provided by residues arginine 96, lysine 100, histidine 102, and 121-129; that span reads DDVATTGTS. Orotate contacts are provided by threonine 125 and arginine 153.

This sequence belongs to the purine/pyrimidine phosphoribosyltransferase family. PyrE subfamily. As to quaternary structure, homodimer. Requires Mg(2+) as cofactor.

It carries out the reaction orotidine 5'-phosphate + diphosphate = orotate + 5-phospho-alpha-D-ribose 1-diphosphate. Its pathway is pyrimidine metabolism; UMP biosynthesis via de novo pathway; UMP from orotate: step 1/2. Catalyzes the transfer of a ribosyl phosphate group from 5-phosphoribose 1-diphosphate to orotate, leading to the formation of orotidine monophosphate (OMP). This is Orotate phosphoribosyltransferase from Aeropyrum pernix (strain ATCC 700893 / DSM 11879 / JCM 9820 / NBRC 100138 / K1).